A 271-amino-acid chain; its full sequence is 5'-AMP-activated protein kinase subunit beta-2 (271 aa).

Residues 1–46 are disordered; sequence MGNTTSERVSGERHGAKAARAEGGGHGPGKEHKIMVGSTDDPSVFS. Position 38 is a phosphoserine; by ULK1 (Ser38). The residue at position 39 (Thr39) is a Phosphothreonine; by ULK1. Ser68 carries the phosphoserine; by ULK1 modification. Ser94 and Ser107 each carry phosphoserine. Position 147 is a phosphothreonine (Thr147). A phosphoserine mark is found at Ser157, Ser169, Ser173, and Ser183.

Belongs to the 5'-AMP-activated protein kinase beta subunit family. In terms of assembly, AMPK is a heterotrimer of an alpha catalytic subunit (PRKAA1 or PRKAA2), a beta (PRKAB1 or PRKAB2) and a gamma non-catalytic subunits (PRKAG1, PRKAG2 or PRKAG3). Phosphorylated when associated with the catalytic subunit (PRKAA1 or PRKAA2). Phosphorylated by ULK1 and ULK2; leading to negatively regulate AMPK activity and suggesting the existence of a regulatory feedback loop between ULK1, ULK2 and AMPK.

Functionally, non-catalytic subunit of AMP-activated protein kinase (AMPK), an energy sensor protein kinase that plays a key role in regulating cellular energy metabolism. In response to reduction of intracellular ATP levels, AMPK activates energy-producing pathways and inhibits energy-consuming processes: inhibits protein, carbohydrate and lipid biosynthesis, as well as cell growth and proliferation. AMPK acts via direct phosphorylation of metabolic enzymes, and by longer-term effects via phosphorylation of transcription regulators. Also acts as a regulator of cellular polarity by remodeling the actin cytoskeleton; probably by indirectly activating myosin. Beta non-catalytic subunit acts as a scaffold on which the AMPK complex assembles, via its C-terminus that bridges alpha (PRKAA1 or PRKAA2) and gamma subunits (PRKAG1, PRKAG2 or PRKAG3). The protein is 5'-AMP-activated protein kinase subunit beta-2 (Prkab2) of Mus musculus (Mouse).